Reading from the N-terminus, the 521-residue chain is Protein translocase subunit SecD (521 aa).

The next 6 helical transmembrane spans lie at 8–28 (LKLA…LPNG), 359–379 (AGIL…VLFY), 388–408 (IALL…EATL), 410–430 (LPGM…NILI), 459–479 (IVDS…FGTG), and 483–503 (GFAL…LLLS).

This sequence belongs to the SecD/SecF family. SecD subfamily. Forms a complex with SecF. Part of the essential Sec protein translocation apparatus which comprises SecA, SecYEG and auxiliary proteins SecDF-YajC and YidC.

It localises to the cell inner membrane. Part of the Sec protein translocase complex. Interacts with the SecYEG preprotein conducting channel. SecDF uses the proton motive force (PMF) to complete protein translocation after the ATP-dependent function of SecA. This Acetobacter pasteurianus (strain NBRC 105184 / IFO 3283-01) protein is Protein translocase subunit SecD.